We begin with the raw amino-acid sequence, 121 residues long: Ribonuclease P protein component (121 aa).

This sequence belongs to the RnpA family. In terms of assembly, consists of a catalytic RNA component (M1 or rnpB) and a protein subunit.

The catalysed reaction is Endonucleolytic cleavage of RNA, removing 5'-extranucleotides from tRNA precursor.. Functionally, RNaseP catalyzes the removal of the 5'-leader sequence from pre-tRNA to produce the mature 5'-terminus. It can also cleave other RNA substrates such as 4.5S RNA. The protein component plays an auxiliary but essential role in vivo by binding to the 5'-leader sequence and broadening the substrate specificity of the ribozyme. The polypeptide is Ribonuclease P protein component (Chromobacterium violaceum (strain ATCC 12472 / DSM 30191 / JCM 1249 / CCUG 213 / NBRC 12614 / NCIMB 9131 / NCTC 9757 / MK)).